Consider the following 283-residue polypeptide: Putative casein kinase II subunit beta-4 (283 aa).

Disordered stretches follow at residues 1–23 (MYKDRSGGGIMGGGGSSRSEILG) and 35–92 (LDKH…SEGD). A compositionally biased stretch (gly residues) spans 7-16 (GGGIMGGGGS). Polar residues predominate over residues 58 to 70 (VPSTSTAKSQLHS).

It belongs to the casein kinase 2 subunit beta family. In terms of assembly, heterotetramer of two catalytic alpha subunits and two regulatory beta subunits. In terms of processing, phosphorylated by alpha subunit.

Its subcellular location is the cytoplasm. It is found in the cytosol. Functionally, plays a complex role in regulating the basal catalytic activity of the alpha subunit. The tetrameric holoenzyme CK2, composed of two alpha and two beta subunits, phosphorylates the transcription factor PIF1 after an exposure to light, resulting in a proteasome-dependent degradation of PIF1 and promotion of photomorphogenesis. CK2 phosphorylates translation initiation factors. May participate in the regulation of the initiation of translation. The protein is Putative casein kinase II subunit beta-4 of Arabidopsis thaliana (Mouse-ear cress).